Consider the following 594-residue polypeptide: Homeobox protein prospero homolog 1 (594 aa).

2 stretches are compositionally biased toward polar residues: residues 1 to 13 (MSSG…ATAQ) and 36 to 50 (PPVN…SSNR). Disordered stretches follow at residues 1–20 (MSSG…NGFS), 30–180 (IYYS…FQPQ), and 358–389 (DTSS…SASA). The span at 73-101 (STSVSSNSSSSSSTSNTNSTPSSSSTSSK) shows a compositional bias: low complexity. Positions 105–117 (EGMTETETMTASI) are enriched in polar residues. Basic and acidic residues predominate over residues 118–135 (EQEKVIQNEESEAGKDGM). Residues 136-162 (EEHDDGMNDFEIIDDTNDEVEESEERE) show a composition bias toward acidic residues. Residues 369 to 378 (KVEIKKEDAM) are compositionally biased toward basic and acidic residues. Residues 379-389 (SSRASPLSASA) are compositionally biased toward low complexity. The Prospero-type homeo domain maps to 435–493 (SSMLTPMHLRKAKLMFFYTRYPNSNLLKSYFPDIRFNKNNTAQLVKWFSNFREFYYNQM). The segment at 435–593 (SSMLTPMHLR…KEPNFLERLE (159 aa)) is homeo-Prospero. In terms of domain architecture, Prospero spans 494 to 593 (EKFARQALAE…KEPNFLERLE (100 aa)).

It belongs to the Prospero homeodomain family.

Its subcellular location is the nucleus. In terms of biological role, transcription factor involved in developmental processes. Controls the transcription of genes required for excretory canal formation. This chain is Homeobox protein prospero homolog 1, found in Caenorhabditis elegans.